A 301-amino-acid polypeptide reads, in one-letter code: ATP synthase gamma chain (301 aa).

It belongs to the ATPase gamma chain family. F-type ATPases have 2 components, CF(1) - the catalytic core - and CF(0) - the membrane proton channel. CF(1) has five subunits: alpha(3), beta(3), gamma(1), delta(1), epsilon(1). CF(0) has three main subunits: a, b and c.

The protein resides in the cell inner membrane. Produces ATP from ADP in the presence of a proton gradient across the membrane. The gamma chain is believed to be important in regulating ATPase activity and the flow of protons through the CF(0) complex. This is ATP synthase gamma chain from Helicobacter pylori (strain HPAG1).